Reading from the N-terminus, the 137-residue chain is MLQPKRTKYRKMHKGRNCGLSWNANVVSFGQYGLRATAHGQLTARQIEAARRSISRYVKRGGKLLIRVFPDKPITKKPIEVRMGSGKGNVEYWVAQIQPGRMIYEIEGVSEDVAREAFRLAASKLSVTTAFVVRTVR.

It belongs to the universal ribosomal protein uL16 family. As to quaternary structure, part of the 50S ribosomal subunit.

In terms of biological role, binds 23S rRNA and is also seen to make contacts with the A and possibly P site tRNAs. The chain is Large ribosomal subunit protein uL16 from Xylella fastidiosa (strain M23).